We begin with the raw amino-acid sequence, 669 residues long: Probable potassium transport system protein Kup (669 aa).

12 consecutive transmembrane segments (helical) span residues 47–67, 86–106, 144–164, 172–192, 206–226, 252–272, 288–308, 326–346, 378–398, 404–424, 435–455, and 460–480; these read VLML…TSPL, VIGI…IKYM, TIIG…TPAI, GLTL…IFVM, IGVI…LLGI, GMAG…GEAL, WFFV…ALLL, ALLP…QALI, IYIP…VLTF, LAAA…ILAF, LLKS…FFGA, and IPHG…LMTT.

Belongs to the HAK/KUP transporter (TC 2.A.72) family.

The protein localises to the cell inner membrane. It catalyses the reaction K(+)(in) + H(+)(in) = K(+)(out) + H(+)(out). Transport of potassium into the cell. Likely operates as a K(+):H(+) symporter. The protein is Probable potassium transport system protein Kup of Bdellovibrio bacteriovorus (strain ATCC 15356 / DSM 50701 / NCIMB 9529 / HD100).